The primary structure comprises 331 residues: Laforin (331 aa).

Residues 1–124 (MLFRFGVVVP…NNLVDGVYCL (124 aa)) form the CBM20 domain. At Ser25 the chain carries Phosphoserine; by AMPK. Substrate is bound by residues Trp32, Lys87, 103–107 (GPHHD), Asp197, Asp235, and Arg241. Positions 156 to 323 (HYSRILPNIW…QQDFFQKFGK (168 aa)) constitute a Tyrosine-protein phosphatase domain. Catalysis depends on Cys266, which acts as the Phosphocysteine intermediate. The Glucan phosphatase signature motif CXAGXGR signature appears at 266–272 (CNAGVGR). Residues 267-272 (NAGVGR) and Tyr304 each bind substrate.

Belongs to the protein-tyrosine phosphatase family. As to quaternary structure, homodimer. Interacts with itself. Interacts with PPP1R3B, PPP1R3C, PPP1R3D, HIRIP5, and EPM2AIP1. Binds glycogen and Lafora bodies. Interacts with NHLRC1/malin (via the NHL repeats). Forms a complex with NHLRC1/malin and HSP70. Interacts with PPP1R3D; in the presence of NHLC1/malin the interaction leads to ubiquitination and autophagic degradation of PPP1R3D. Interacts (via the phosphatase domain) with MAPT/Tau; the interaction dephosphorylates MAPT. Interacts with PRDM8. Post-translationally, polyubiquitinated by NHLRC1/malin. In terms of processing, phosphorylation on Ser-25 by AMPK affects the phosphatase activity of the enzyme and its ability to homodimerize and interact with NHLRC1, PPP1R3C or PRKAA2. Widely expressed.

It localises to the cytoplasm. The protein resides in the endoplasmic reticulum membrane. It is found in the cell membrane. The enzyme catalyses O-phospho-L-tyrosyl-[protein] + H2O = L-tyrosyl-[protein] + phosphate. It carries out the reaction O-phospho-L-seryl-[protein] + H2O = L-seryl-[protein] + phosphate. It catalyses the reaction O-phospho-L-threonyl-[protein] + H2O = L-threonyl-[protein] + phosphate. In terms of biological role, plays an important role in preventing glycogen hyperphosphorylation and the formation of insoluble aggregates, via its activity as glycogen phosphatase, and by promoting the ubiquitination of proteins involved in glycogen metabolism via its interaction with the E3 ubiquitin ligase NHLRC1/malin. Dephosphorylates phosphotyrosine and synthetic substrates, such as para-nitrophenylphosphate (pNPP), and has low activity with phosphoserine and phosphothreonine substrates (in vitro). Has also been shown to dephosphorylate MAPT. Shows strong phosphatase activity towards complex carbohydrates in vitro, avoiding glycogen hyperphosphorylation which is associated with reduced branching and formation of insoluble aggregates. Forms a complex with NHLRC1/malin and HSP70, which suppresses the cellular toxicity of misfolded proteins by promoting their degradation through the ubiquitin-proteasome system (UPS). Acts as a scaffold protein to facilitate PPP1R3C/PTG ubiquitination by NHLRC1/malin. Also promotes proteasome-independent protein degradation through the macroautophagy pathway. This is Laforin (Epm2a) from Rattus norvegicus (Rat).